Reading from the N-terminus, the 677-residue chain is Nuclear fusion protein FUS2 (677 aa).

Thr20 carries the post-translational modification Phosphothreonine. Phosphoserine occurs at positions 67, 72, and 84. Thr88 is subject to Phosphothreonine. Phosphoserine is present on residues Ser100 and Ser106. In terms of domain architecture, DH spans 112–326 (KFYKIVQEFY…KYSLFSNKLE (215 aa)).

It localises to the cell tip. Functionally, promotes cell fusion during zygote formation. In Saccharomyces cerevisiae (strain ATCC 204508 / S288c) (Baker's yeast), this protein is Nuclear fusion protein FUS2 (FUS2).